A 174-amino-acid chain; its full sequence is U-stichotoxin-Hau2a (174 aa).

The first 18 residues, 1–18, serve as a signal peptide directing secretion; that stretch reads MKPIFIVALLFSTCLVNA. Residues 19 to 33 constitute a propeptide that is removed on maturation; it reads KPSINDADIKREPEP. Position 39 is a hydroxyproline (Pro-39). Cystine bridges form between Cys-40/Cys-51 and Cys-43/Cys-58. A propeptide spanning residues 61-67 is cleaved from the precursor; the sequence is RKREPEP. The residue at position 73 (Pro-73) is a Hydroxyproline. 2 disulfides stabilise this stretch: Cys-74/Cys-85 and Cys-77/Cys-92. Residues 95 to 101 constitute a propeptide that is removed on maturation; that stretch reads RKREPEP. Position 107 is a hydroxyproline (Pro-107). Cystine bridges form between Cys-108–Cys-119 and Cys-111–Cys-126. A propeptide spanning residues 129–135 is cleaved from the precursor; that stretch reads RKREPEP. Pro-141 carries the hydroxyproline modification. 2 disulfides stabilise this stretch: Cys-142–Cys-153 and Cys-145–Cys-160. Residues 163–174 constitute a propeptide that is removed on maturation; it reads RKREPENQDLWS.

It belongs to the sea anemone BBH family.

It is found in the secreted. It localises to the nematocyst. Its function is as follows. Neurotoxin that paralyzes freshwater crabs at high concentration. In Heteractis aurora (Banded sea anemone), this protein is U-stichotoxin-Hau2a.